A 261-amino-acid chain; its full sequence is ATP synthase subunit a (261 aa).

A run of 8 helical transmembrane segments spans residues 30–50 (VLFTNSALWMVVAAITLGLFM), 63–83 (WQVAVEGFTGFISSMMMANIG), 96–116 (LFMFILFCNLLGMLPLGVLGL), 125–145 (IAITGVLALISFAIVLVVGFW), 151–171 (FFSLFVPHGTPLPMIPIIAPI), 187–207 (LFVAMTAGHVLLKVLSGFVIN), 214–234 (LWLGSIVSVLSFTLMIGISAL), and 235–255 (ELLVAGIQAYVFALLTSLYIN).

The protein belongs to the ATPase A chain family. In terms of assembly, F-type ATPases have 2 components, CF(1) - the catalytic core - and CF(0) - the membrane proton channel. CF(1) has five subunits: alpha(3), beta(3), gamma(1), delta(1), epsilon(1). CF(0) has three main subunits: a(1), b(2) and c(9-12). The alpha and beta chains form an alternating ring which encloses part of the gamma chain. CF(1) is attached to CF(0) by a central stalk formed by the gamma and epsilon chains, while a peripheral stalk is formed by the delta and b chains.

The protein localises to the cell inner membrane. In terms of biological role, key component of the proton channel; it plays a direct role in the translocation of protons across the membrane. This is ATP synthase subunit a from Sphingopyxis alaskensis (strain DSM 13593 / LMG 18877 / RB2256) (Sphingomonas alaskensis).